The following is a 194-amino-acid chain: Putative manganese efflux pump MntP (194 aa).

6 helical membrane passes run P3–G23, L37–L57, I65–I85, L112–F132, I137–M157, and A170–L190.

It belongs to the MntP (TC 9.B.29) family.

The protein resides in the cell inner membrane. Probably functions as a manganese efflux pump. This Xylella fastidiosa (strain M12) protein is Putative manganese efflux pump MntP.